The chain runs to 565 residues: Arginine--tRNA ligase (565 aa).

The 'HIGH' region signature appears at 128–138 (ANPTGPLHVGH).

The protein belongs to the class-I aminoacyl-tRNA synthetase family. In terms of assembly, monomer.

Its subcellular location is the cytoplasm. The catalysed reaction is tRNA(Arg) + L-arginine + ATP = L-arginyl-tRNA(Arg) + AMP + diphosphate. This chain is Arginine--tRNA ligase, found in Albidiferax ferrireducens (strain ATCC BAA-621 / DSM 15236 / T118) (Rhodoferax ferrireducens).